Consider the following 396-residue polypeptide: MSDTLLNPYFGEFGGMYVPEILVPVLKQLEEAFVAAQNDPLFQAEFTDLLKNYAGRPTALTLCRNLTKGSKTKLYLKREDLLHGGAHKTNQVLGQALLAKRMGKTRIIAETGAGQHGVATALACAMLDLPCVIYMGAKDVERQSPNVFRMRLMGAEVIPVQKGSCSLKDACCEAMRDWAANYETTHYLIGTAAGPHPFPTMVREFQKMIGEETKRQILEKENRLPDAVIAAVGGGSNAIGMFADFIEEKSVQLIGVEPAGKGIETGEHGAPLKHGTTGIYFGMKSPIMQTKDGQIEESYSISAGLDFPSVGPQHAYLNSIGRAEYVSITDQEALDAFQALAQHEGIIPALESSHALAYALKLIAQNPDKEQLLVVNLSGRGDKDIFTVDKILNGGN.

N6-(pyridoxal phosphate)lysine is present on K88.

It belongs to the TrpB family. As to quaternary structure, tetramer of two alpha and two beta chains. Pyridoxal 5'-phosphate is required as a cofactor.

It catalyses the reaction (1S,2R)-1-C-(indol-3-yl)glycerol 3-phosphate + L-serine = D-glyceraldehyde 3-phosphate + L-tryptophan + H2O. It participates in amino-acid biosynthesis; L-tryptophan biosynthesis; L-tryptophan from chorismate: step 5/5. In terms of biological role, the beta subunit is responsible for the synthesis of L-tryptophan from indole and L-serine. The chain is Tryptophan synthase beta chain from Actinobacillus pleuropneumoniae serotype 5b (strain L20).